The sequence spans 149 residues: Putative pre-16S rRNA nuclease (149 aa).

It belongs to the YqgF nuclease family.

The protein localises to the cytoplasm. Could be a nuclease involved in processing of the 5'-end of pre-16S rRNA. In Burkholderia lata (strain ATCC 17760 / DSM 23089 / LMG 22485 / NCIMB 9086 / R18194 / 383), this protein is Putative pre-16S rRNA nuclease.